A 433-amino-acid chain; its full sequence is Probable non-inhibitory serpin-Z5 (433 aa).

Basic and acidic residues predominate over residues 1-12; sequence MEPKEKKQKLDT. Residues 1–43 form a disordered region; that stretch reads MEPKEKKQKLDTSEVASPSLSKTHLKKKKTKKQKIRKSQEITS. Basic residues predominate over residues 23 to 36; the sequence is THLKKKKTKKQKIR. Residues 380–404 form an RCL region; it reads GTEAVTFTAFRSAYLGCALVKPIDF.

Belongs to the serpin family. As to expression, weakly expressed during seedling development.

The polypeptide is Probable non-inhibitory serpin-Z5 (Arabidopsis thaliana (Mouse-ear cress)).